A 670-amino-acid chain; its full sequence is DNA ligase (670 aa).

Residues 32–36, 81–82, and glutamate 113 contribute to the NAD(+) site; these read DAEYD and SL. Lysine 115 functions as the N6-AMP-lysine intermediate in the catalytic mechanism. Residues arginine 136, glutamate 173, lysine 290, and lysine 314 each contribute to the NAD(+) site. Residues cysteine 406, cysteine 409, cysteine 424, and cysteine 430 each coordinate Zn(2+). Residues 592–670 form the BRCT domain; sequence EIDSPFAGKT…EQEMMRLLGE (79 aa).

This sequence belongs to the NAD-dependent DNA ligase family. LigA subfamily. Mg(2+) is required as a cofactor. It depends on Mn(2+) as a cofactor.

It carries out the reaction NAD(+) + (deoxyribonucleotide)n-3'-hydroxyl + 5'-phospho-(deoxyribonucleotide)m = (deoxyribonucleotide)n+m + AMP + beta-nicotinamide D-nucleotide.. Its function is as follows. DNA ligase that catalyzes the formation of phosphodiester linkages between 5'-phosphoryl and 3'-hydroxyl groups in double-stranded DNA using NAD as a coenzyme and as the energy source for the reaction. It is essential for DNA replication and repair of damaged DNA. This Erwinia tasmaniensis (strain DSM 17950 / CFBP 7177 / CIP 109463 / NCPPB 4357 / Et1/99) protein is DNA ligase.